The following is a 669-amino-acid chain: Glutaminase kidney isoform, mitochondrial (669 aa).

A mitochondrion-targeting transit peptide spans 1 to 54 (MMRLRGSGMLRDLLLRSPAGVSATLRRAQPLVTLCRRPRGGGRPAAGPAAAARL). Residues 68 to 118 (LARGLSSSPSEILQELGKGSTHPQPGVSPPAAPAAPGPKDGPGETDAFGNS) form a disordered region. The segment covering 93-103 (GVSPPAAPAAP) has biased composition (pro residues). 2 positions are modified to N6-succinyllysine: K130 and K164. Substrate is bound at residue S286. The residue at position 311 (K311) is an N6-acetyllysine. Residues 315-322 (GLRFNKLF) are highly mobile activation loop. The substrate site is built by N335, E381, N388, Y414, Y466, and V484. 2 ANK repeats span residues 585-614 (DSRT…VNPF) and 619-648 (WNNT…QYTP). A disordered region spans residues 647-669 (TPQGDSDNGKENQTVHKNLDGLL). S652 is subject to Phosphoserine. A compositionally biased stretch (basic and acidic residues) spans 653–669 (DNGKENQTVHKNLDGLL).

Belongs to the glutaminase family. In terms of assembly, homotetramer, dimer of dimers. The tetramers can assemble into rod-like oligomers (in vitro), but the physiological significance of this is not clear. Interacts with RAF1 and MAP2K2. Interacts with ATCAY; the interaction is direct and may control GLS localization, negatively regulating its activity. Post-translationally, synthesized as a 74-kDa cytosolic precursor which is proteolytically processed by the mitochondrial-processing peptidase (MPP) via a 72-kDa intermediate to yield the mature mitochondrial 68- and 65-kDa subunits. As to expression, isoform 1 and isoform 3 are detected in brain cortex. Isoform 3 is highly expressed in astrocytoma, ganglioglioma and ependymoma. Isoform 1 is highly expressed in brain and kidney, but not detected in liver. Isoform 3 is highly expressed in heart and pancreas, detected at lower levels in placenta, lung, pancreas and kidney, but is not detected in liver. Isoform 2 is expressed in cardiac and skeletal muscle.

The protein resides in the mitochondrion. Its subcellular location is the cytoplasm. It localises to the cytosol. The protein localises to the mitochondrion matrix. It catalyses the reaction L-glutamine + H2O = L-glutamate + NH4(+). Isoform 1 and isoform 3 are activated by phosphate. Inhibited by BPTES. BPTES binds between subunits and favors dissociation of the tetramer into dimers. Inhibited by 6-diazo-5-oxo-L-norleucine (DON). Enzyme activity is stimulated by phosphorylation. Functionally, catalyzes the first reaction in the primary pathway for the renal catabolism of glutamine. Plays a role in maintaining acid-base homeostasis. Regulates the levels of the neurotransmitter glutamate, the main excitatory neurotransmitter in the brain. In terms of biological role, lacks catalytic activity. This chain is Glutaminase kidney isoform, mitochondrial (GLS), found in Homo sapiens (Human).